Reading from the N-terminus, the 124-residue chain is Large ribosomal subunit protein bL12 (124 aa).

Belongs to the bacterial ribosomal protein bL12 family. Homodimer. Part of the ribosomal stalk of the 50S ribosomal subunit. Forms a multimeric L10(L12)X complex, where L10 forms an elongated spine to which 2 to 4 L12 dimers bind in a sequential fashion. Binds GTP-bound translation factors.

In terms of biological role, forms part of the ribosomal stalk which helps the ribosome interact with GTP-bound translation factors. Is thus essential for accurate translation. This Bacteroides thetaiotaomicron (strain ATCC 29148 / DSM 2079 / JCM 5827 / CCUG 10774 / NCTC 10582 / VPI-5482 / E50) protein is Large ribosomal subunit protein bL12.